The chain runs to 481 residues: UDP-N-acetylmuramoyl-L-alanyl-D-glutamate--L-lysine ligase (481 aa).

Ser-42 is a UDP-N-acetyl-alpha-D-muramoyl-L-alanyl-D-glutamate binding site. 118 to 124 (GTKGKTT) is a binding site for ATP. Residues 160-161 (TT), Ser-187, and Arg-195 each bind UDP-N-acetyl-alpha-D-muramoyl-L-alanyl-D-glutamate. Lys-229 bears the N6-carboxylysine mark. An L-lysine recognition motif motif is present at residues 404–407 (DDPN).

Belongs to the MurCDEF family. MurE subfamily. Carboxylation is probably crucial for Mg(2+) binding and, consequently, for the gamma-phosphate positioning of ATP.

Its subcellular location is the cytoplasm. It catalyses the reaction UDP-N-acetyl-alpha-D-muramoyl-L-alanyl-D-glutamate + L-lysine + ATP = UDP-N-acetyl-alpha-D-muramoyl-L-alanyl-gamma-D-glutamyl-L-lysine + ADP + phosphate + H(+). Its pathway is cell wall biogenesis; peptidoglycan biosynthesis. Functionally, catalyzes the addition of L-lysine to the nucleotide precursor UDP-N-acetylmuramoyl-L-alanyl-D-glutamate (UMAG) in the biosynthesis of bacterial cell-wall peptidoglycan. This is UDP-N-acetylmuramoyl-L-alanyl-D-glutamate--L-lysine ligase from Streptococcus sanguinis (strain SK36).